A 429-amino-acid chain; its full sequence is Phosphomethylpyrimidine synthase (429 aa).

Substrate contacts are provided by residues asparagine 66, methionine 95, tyrosine 124, histidine 163, 185-187 (SRG), 226-229 (DGLR), and glutamate 265. A Zn(2+)-binding site is contributed by histidine 269. Tyrosine 292 contacts substrate. Zn(2+) is bound at residue histidine 333. [4Fe-4S] cluster contacts are provided by cysteine 409, cysteine 412, and cysteine 416.

The protein belongs to the ThiC family. It depends on [4Fe-4S] cluster as a cofactor.

It catalyses the reaction 5-amino-1-(5-phospho-beta-D-ribosyl)imidazole + S-adenosyl-L-methionine = 4-amino-2-methyl-5-(phosphooxymethyl)pyrimidine + CO + 5'-deoxyadenosine + formate + L-methionine + 3 H(+). It participates in cofactor biosynthesis; thiamine diphosphate biosynthesis. Catalyzes the synthesis of the hydroxymethylpyrimidine phosphate (HMP-P) moiety of thiamine from aminoimidazole ribotide (AIR) in a radical S-adenosyl-L-methionine (SAM)-dependent reaction. The sequence is that of Phosphomethylpyrimidine synthase from Carboxydothermus hydrogenoformans (strain ATCC BAA-161 / DSM 6008 / Z-2901).